The following is a 205-amino-acid chain: Probable GTP-binding protein EngB (205 aa).

The 175-residue stretch at 29 to 203 folds into the EngB-type G domain; that stretch reads QGAEIAFIGR…KAVLSQWFRS (175 aa). GTP-binding positions include 37–44, 64–68, 82–85, 149–152, and 182–184; these read GRSNAGKS, GRTQM, DLPG, TKSD, and FSS. Mg(2+) is bound by residues serine 44 and threonine 66.

It belongs to the TRAFAC class TrmE-Era-EngA-EngB-Septin-like GTPase superfamily. EngB GTPase family. The cofactor is Mg(2+).

Necessary for normal cell division and for the maintenance of normal septation. The polypeptide is Probable GTP-binding protein EngB (Coxiella burnetii (strain RSA 493 / Nine Mile phase I)).